The sequence spans 1174 residues: Male determiner protein Mdmd(V) (1174 aa).

Residues 1 to 15 (MNATDAESRKPENKP) show a composition bias toward basic and acidic residues. 3 disordered regions span residues 1-51 (MNAT…SGQR), 79-110 (RKDGSNEMLPKEDSINTNHNYTTDSNEHPVEL), and 136-259 (KQLS…LRRS). The span at 16–35 (SSESSSSGSTSGSSDGEVSS) shows a compositional bias: low complexity. A compositionally biased stretch (polar residues) spans 36-47 (KTYFKNNKSKVL). Over residues 79-92 (RKDGSNEMLPKEDS) the composition is skewed to basic and acidic residues. A compositionally biased stretch (polar residues) spans 93 to 102 (INTNHNYTTD). Positions 138-153 (LSAYRSRSRSTRLSYS) are enriched in low complexity. Residues 167–180 (SRYKKSVLRSRRTS) are compositionally biased toward basic residues. Basic and acidic residues predominate over residues 183–200 (HGRDSSTTKRSVSRDKDN). Positions 201-223 (RLRRRIGSSRSHTRSHSRFRRSE) are enriched in basic residues. Residues 235–259 (RSQERRHERRRSMSSDYERIALRRS) are compositionally biased toward basic and acidic residues. The MIF4G domain occupies 348–531 (KKYIHGYINK…KVLFQVRRDG (184 aa)). Residues 597 to 608 (DSDGSFGSGSNS) are compositionally biased toward low complexity. Residues 597-616 (DSDGSFGSGSNSETALSDCD) form a disordered region. The MI domain maps to 641–757 (ALRRTIYLTL…SWDVLDCIKL (117 aa)). The span at 840-857 (SAPSSSSSSSLSSELSAP) shows a compositional bias: low complexity. Disordered regions lie at residues 840–1045 (SAPS…SRTK) and 1095–1133 (RKDNYGNRQNHEISQRHDSEIKRRREERKKRHHEKNHSR). Residues 869–909 (KKKHKGKNKKMTKKKNPSKKKEKTKKIVGKNKIAAKNKTIK) are compositionally biased toward basic residues. Basic and acidic residues predominate over residues 910-924 (RRTDKDNSSSKDNFL). Over residues 926–957 (SESSSNESISLDSLSSELFAPSSYSSSESSND) the composition is skewed to low complexity. Positions 963–1001 (KHKGKNKKMTKKKNPSNKREKTKKKLSKNKKAPNKNTKK) are enriched in basic residues. A compositionally biased stretch (low complexity) spans 1010 to 1020 (SSESSISESKS). The span at 1034–1045 (RKKRVTSKSRTK) shows a compositional bias: basic residues. Basic and acidic residues predominate over residues 1095–1118 (RKDNYGNRQNHEISQRHDSEIKRR). The segment covering 1119–1130 (REERKKRHHEKN) has biased composition (basic residues).

The protein belongs to the CWC22 family. Component of the spliceosome C complex.

It is found in the nucleus speckle. In terms of biological role, male determiner protein (M-factor) that controls male somatic sexual differentiation. Acts as a dominant factor that regulates the mRNA splicing of transformer (tra) and doublesex (dsx) transcripts and promotes expression of male splice forms of tra and dsx. Probably acts as a component of the spliceosome C complex required for mRNA splicing factor and exon-junction complex (EJC) assembly. Hinders eIF4AIII from non-specifically binding RNA and escorts it to the splicing machinery to promote EJC assembly on mature mRNAs. The chain is Male determiner protein Mdmd(V) from Musca domestica (House fly).